A 172-amino-acid chain; its full sequence is C-phycocyanin beta chain (172 aa).

Position 72 is an N4-methylasparagine (asparagine 72). (2R,3E)-phycocyanobilin-binding residues include cysteine 82 and cysteine 153.

The protein belongs to the phycobiliprotein family. As to quaternary structure, heterodimer of an alpha and a beta subunit, which further assembles into trimers and the trimers into hexamers. The basic functional unit of phycobiliproteins is a ring-shaped hexamer formed from two back-to-back trimers contacting via the alpha chain subunits. The trimers are composed of alpha/beta subunit heterodimers arranged around a three-fold axis of symmetry. The phycoerythrins also contain a gamma subunit which is located in the center of the hexamer. Post-translationally, contains two covalently linked bilin chromophores.

It is found in the plastid. Its subcellular location is the chloroplast thylakoid membrane. Light-harvesting photosynthetic bile pigment-protein from the phycobiliprotein complex (phycobilisome, PBS). Phycocyanin is the major phycobiliprotein in the PBS rod. The protein is C-phycocyanin beta chain (cpcB) of Aglaothamnion neglectum (Red alga).